Consider the following 670-residue polypeptide: Protein-glutamine gamma-glutamyltransferase 4 (670 aa).

N-linked (GlcNAc...) asparagine glycosylation is found at N151 and N219. C255 is an active-site residue. The N-linked (GlcNAc...) asparagine glycan is linked to N288. Residues H314 and D337 contribute to the active site. N377, D379, E429, and E434 together coordinate Ca(2+). N456 and N491 each carry an N-linked (GlcNAc...) asparagine glycan.

It belongs to the transglutaminase superfamily. Transglutaminase family. As to quaternary structure, homodimer. Requires Ca(2+) as cofactor. In terms of tissue distribution, expressed in the coagulating gland and in the dorsal part of the prostate. Not expressed in the brain, heart, kidney, liver, lung, muscle, pancreas, spleen, stomach, testis and thymus.

The protein localises to the secreted. The catalysed reaction is L-glutaminyl-[protein] + L-lysyl-[protein] = [protein]-L-lysyl-N(6)-5-L-glutamyl-[protein] + NH4(+). Associated with the mammalian reproductive process. Plays an important role in the formation of the seminal coagulum through the cross-linking of specific proteins present in the seminal plasma. Transglutaminase is also required to stabilize the copulatory plug. This chain is Protein-glutamine gamma-glutamyltransferase 4, found in Mus musculus (Mouse).